A 289-amino-acid polypeptide reads, in one-letter code: Elongation factor Ts (289 aa).

The tract at residues threonine 82–leucine 85 is involved in Mg(2+) ion dislocation from EF-Tu.

This sequence belongs to the EF-Ts family.

The protein localises to the cytoplasm. Its function is as follows. Associates with the EF-Tu.GDP complex and induces the exchange of GDP to GTP. It remains bound to the aminoacyl-tRNA.EF-Tu.GTP complex up to the GTP hydrolysis stage on the ribosome. This is Elongation factor Ts from Azotobacter vinelandii (strain DJ / ATCC BAA-1303).